An 802-amino-acid polypeptide reads, in one-letter code: Exocyst complex component 6 (802 aa).

It belongs to the SEC15 family. The exocyst complex is composed of EXOC1, EXOC2, EXOC3, EXOC4, EXOC5, EXOC6, EXOC7 and EXOC8. Interacts with CNTRL. Interacts with RAB11A in a GTP-dependent manner.

The protein localises to the cytoplasm. Its subcellular location is the perinuclear region. It is found in the cell projection. It localises to the growth cone. The protein resides in the midbody. The protein localises to the midbody ring. Functionally, component of the exocyst complex involved in the docking of exocytic vesicles with fusion sites on the plasma membrane. Together with RAB11A, RAB3IP, RAB8A, PARD3, PRKCI, ANXA2, CDC42 and DNMBP promotes transcytosis of PODXL to the apical membrane initiation sites (AMIS), apical surface formation and lumenogenesis. This is Exocyst complex component 6 (Exoc6) from Mus musculus (Mouse).